Here is a 153-residue protein sequence, read N- to C-terminus: Movement protein (153 aa).

The disordered stretch occupies residues 107–153 (SSSARPLPQQPAPSLTSWTPIAKHLHSHQQSISSQSPKLVRGASQRR).

It belongs to the luteoviruses movement protein family.

Its function is as follows. Transports viral genome to neighboring plant cells directly through plasmosdesmata, without any budding. The movement protein allows efficient cell to cell propagation, by bypassing the host cell wall barrier. This is Movement protein from Avena byzantina (Oat).